The primary structure comprises 63 residues: Hyphancin-3F (63 aa).

The first 22 residues, 1 to 22, serve as a signal peptide directing secretion; that stretch reads MNFSRILFFVFACFVALASVSA. The propeptide at 23–26 is removed by a dipeptidylpeptidase; sequence APEP. Leucine amide is present on leucine 61.

Belongs to the cecropin family.

It is found in the secreted. Functionally, has antibacterial activity. The protein is Hyphancin-3F of Hyphantria cunea (Fall webworm moth).